The chain runs to 454 residues: Bifunctional protein GlmU (454 aa).

The segment at 1 to 226 (MSLDIVILAA…AMEVQGANDR (226 aa)) is pyrophosphorylase. UDP-N-acetyl-alpha-D-glucosamine is bound by residues 8 to 11 (LAAG), Lys22, Gln73, 78 to 79 (GT), 99 to 101 (YGD), Gly136, Glu151, Asn166, and Asn224. Mg(2+) is bound at residue Asp101. Mg(2+) is bound at residue Asn224. The tract at residues 227-247 (LQLAQLERHYQSRVARRLMAQ) is linker. The tract at residues 248-454 (GVTLRDPARF…GWQRPTKQKK (207 aa)) is N-acetyltransferase. Residues Arg330 and Lys348 each contribute to the UDP-N-acetyl-alpha-D-glucosamine site. The Proton acceptor role is filled by His360. Tyr363 and Asn374 together coordinate UDP-N-acetyl-alpha-D-glucosamine. Residues Ala377, 383–384 (NY), Ser402, Ala420, and Arg437 contribute to the acetyl-CoA site.

In the N-terminal section; belongs to the N-acetylglucosamine-1-phosphate uridyltransferase family. It in the C-terminal section; belongs to the transferase hexapeptide repeat family. Homotrimer. It depends on Mg(2+) as a cofactor.

It localises to the cytoplasm. The enzyme catalyses alpha-D-glucosamine 1-phosphate + acetyl-CoA = N-acetyl-alpha-D-glucosamine 1-phosphate + CoA + H(+). It carries out the reaction N-acetyl-alpha-D-glucosamine 1-phosphate + UTP + H(+) = UDP-N-acetyl-alpha-D-glucosamine + diphosphate. The protein operates within nucleotide-sugar biosynthesis; UDP-N-acetyl-alpha-D-glucosamine biosynthesis; N-acetyl-alpha-D-glucosamine 1-phosphate from alpha-D-glucosamine 6-phosphate (route II): step 2/2. It functions in the pathway nucleotide-sugar biosynthesis; UDP-N-acetyl-alpha-D-glucosamine biosynthesis; UDP-N-acetyl-alpha-D-glucosamine from N-acetyl-alpha-D-glucosamine 1-phosphate: step 1/1. It participates in bacterial outer membrane biogenesis; LPS lipid A biosynthesis. Its function is as follows. Catalyzes the last two sequential reactions in the de novo biosynthetic pathway for UDP-N-acetylglucosamine (UDP-GlcNAc). The C-terminal domain catalyzes the transfer of acetyl group from acetyl coenzyme A to glucosamine-1-phosphate (GlcN-1-P) to produce N-acetylglucosamine-1-phosphate (GlcNAc-1-P), which is converted into UDP-GlcNAc by the transfer of uridine 5-monophosphate (from uridine 5-triphosphate), a reaction catalyzed by the N-terminal domain. In Azotobacter vinelandii (strain DJ / ATCC BAA-1303), this protein is Bifunctional protein GlmU.